The primary structure comprises 1093 residues: MNMLILKLPKMFSQLWLLLILSLLTLEGPQPSTGSGYTTKSSVDLLENDSRYISYQDLMSTAKRFYDPETTWYSEMLFDVARNQVIVGARDTLYRMSFDLEPLERASWGATPSEIAMCQAKGQSERWCRNYVRVLHSYGENQLYACGTNAFQPSCSWRQMENLTVTGVDSGVVKCPFHPQANSTSLLQSNGQLFVGTATDFSGSDVAILRTGVESNKRFLRTKQYNNNWLSGAQFVGSFEAGHFVYFLLRESAAEHMSCGKVIYSRVARVCKNDVGGGGQLLRDNWTSFLKARLNCSLPGEYPYYFDEIQGMTYAESESILYATFRTSGSSIFGSAVCAYNLSSINAAFDGPFKQQEHSDAAWKTVNTNQRSQFQCGTSSIGHWLESSRYQLMDEAVQPIGAEPLYHSKLEQFGRLALDIINTKTEQVHVLFVASSGNHIKKLSVKYDGDGVQTCLVELWQADDTGTSSLLNMAYLKVSDSLYLGTDLALTRIPAQHCSRHVSQSSCLNSMDPYCGWNELVERCMPQPQDSSVLQHWHQAPQITCPVLNAPIDGGWSTWSPWAVCQQHEQPDSNCQCRQRSCNNPQPQHGGATCEGISTQVTNCTQHGGWTEWSAWSPCSQTCGIAVKIRRRTCGNPRPAFGGRTCVGSEQSEMYCRHLPPCPVAKPQSVDGGWGPWGEWSECSAQCGGGFRMRRRECNDPAPLNGGMECPGCRLDYEECNMQSCQEVRKLSAWTPWLTVTGSGNSSEPHMERRFRFVCRATSPDPSSVRIGLPKEESRNCHADGSCQRQVDHDSADSDAADWSPCSVSCGGGVQQRHRGRGSQSRVCNIHACPAEEQLSSNSLDNELEHGEWGCWSEWSACSVTCGLGLRRRTRRCLAGHDRLCQGRALEEQKCEMVPCEDFLGWSAWSEWSSCSSDGIRLRHRRCLVEQPGSMECRGAEFEKTACVPNECEETQTASTATLPIVIFVGLLFTVACCLATYRFTKKRFMLSAEEALNKTTTTTASFDTYPNQYSSLPTKDYYDQRPKRQSSFRMPAKTSNLGNGNGTLNRNNMHQNNTPKVLAKTYIDCESGTIKRQSALNNCRSNIDDEKF.

A signal peptide spans 1–34 (MNMLILKLPKMFSQLWLLLILSLLTLEGPQPSTG). N-linked (GlcNAc...) asparagine glycosylation occurs at N48. The 446-residue stretch at 50-495 (SRYISYQDLM…TDLALTRIPA (446 aa)) folds into the Sema domain. 2 disulfide bridges follow: C118–C128 and C146–C155. 4 N-linked (GlcNAc...) asparagine glycosylation sites follow: N162, N182, N285, and N295. 2 cysteine pairs are disulfide-bonded: C271–C376 and C296–C338. Residue N341 is glycosylated (N-linked (GlcNAc...) asparagine). Residues 497–546 (HCSRHVSQSSCLNSMDPYCGWNELVERCMPQPQDSSVLQHWHQAPQITCP) enclose the PSI domain. TSP type-1 domains follow at residues 553–605 (DGGW…TNCT), 607–663 (HGGW…PPCP), and 671–726 (DGGW…QSCQ). N603 carries an N-linked (GlcNAc...) asparagine glycan. 6 disulfides stabilise this stretch: C619/C656, C623/C662, C634/C646, C683/C720, C687/C725, and C698/C710. The N-linked (GlcNAc...) asparagine glycan is linked to N745. TSP type-1 domains are found at residues 794-834 (DSAD…HACP), 850-901 (HGEW…VPCE), and 904-953 (LGWS…NECE). Intrachain disulfides connect C862/C895, C866/C900, and C877/C885. A helical transmembrane segment spans residues 960–980 (TATLPIVIFVGLLFTVACCLA). N-linked (GlcNAc...) asparagine glycosylation is found at N998 and N1046. Residues 1018 to 1056 (PTKDYYDQRPKRQSSFRMPAKTSNLGNGNGTLNRNNMHQ) are disordered. Positions 1041 to 1053 (NLGNGNGTLNRNN) are enriched in low complexity.

The protein belongs to the semaphorin family. In terms of tissue distribution, in egg chambers, high levels of expression in the follicle cells, with little to no expression in the germ cells (at protein level). In stage 3 to 7 egg chambers, planar polarized at the basal epithelial surface (at protein level).

The protein resides in the apical cell membrane. It is found in the lateral cell membrane. The protein localises to the endosome. Regulates the motility of migrating epithelial cells by providing guidance cues within the migratory environment and may also play a role in development of the olfactory system. May act as a positive axonal guidance cue. Function in neurons is essential for adult survival and is important for climbing behavior. Promotes collective migration of follicular epithelial cells in egg chambers, likely by acting at the leading edge of the basal epithelium cells to provide guidance cues across the cell boundary to the trailing edge of the cell ahead. The transmembrane receptor PlexA on the trailing edge of the cell ahead, appears to transduce this signal to suppress the formation of protrusions. Involved in olfactory avoidance behavior. In Drosophila melanogaster (Fruit fly), this protein is Semaphorin 5c.